The sequence spans 306 residues: 33 kDa chaperonin (306 aa).

2 disulfide bridges follow: Cys-242–Cys-244 and Cys-275–Cys-278.

Belongs to the HSP33 family. Under oxidizing conditions two disulfide bonds are formed involving the reactive cysteines. Under reducing conditions zinc is bound to the reactive cysteines and the protein is inactive.

Its subcellular location is the cytoplasm. Redox regulated molecular chaperone. Protects both thermally unfolding and oxidatively damaged proteins from irreversible aggregation. Plays an important role in the bacterial defense system toward oxidative stress. The polypeptide is 33 kDa chaperonin (Gloeobacter violaceus (strain ATCC 29082 / PCC 7421)).